Reading from the N-terminus, the 313-residue chain is Ribosomal RNA small subunit methyltransferase H (313 aa).

Residues 33–35 (AGH), Asp53, Phe82, Asp103, and Gln110 contribute to the S-adenosyl-L-methionine site.

It belongs to the methyltransferase superfamily. RsmH family.

The protein localises to the cytoplasm. The enzyme catalyses cytidine(1402) in 16S rRNA + S-adenosyl-L-methionine = N(4)-methylcytidine(1402) in 16S rRNA + S-adenosyl-L-homocysteine + H(+). In terms of biological role, specifically methylates the N4 position of cytidine in position 1402 (C1402) of 16S rRNA. This is Ribosomal RNA small subunit methyltransferase H from Acetivibrio thermocellus (strain ATCC 27405 / DSM 1237 / JCM 9322 / NBRC 103400 / NCIMB 10682 / NRRL B-4536 / VPI 7372) (Clostridium thermocellum).